Reading from the N-terminus, the 302-residue chain is Nodulation protein D 3 (302 aa).

Residues L6–T63 form the HTH lysR-type domain. Positions L23–R42 form a DNA-binding region, H-T-H motif.

Belongs to the LysR transcriptional regulatory family.

Functionally, nodD regulates the expression of the nodABCFE genes which encode other nodulation proteins. NodD is also a negative regulator of its own expression. Binds flavonoids as inducers. This chain is Nodulation protein D 3 (nodD3), found in Rhizobium leguminosarum bv. phaseoli.